Consider the following 113-residue polypeptide: Virion membrane protein A21 homolog (113 aa).

A helical; Signal-anchor for type III membrane protein transmembrane segment spans residues 1–23; it reads MFVLFLIVCYFILIFNIIVPKIA. The Virion surface segment spans residues 24-113; it reads DKLRLEHEAF…CERAYTELFL (90 aa).

The protein belongs to the chordopoxvirinae A21 family. In terms of assembly, envelope protein part of a stable entry-fusion complex (EFC) which is at least composed of proteins A16, A21, A28, G3, G9, H2, J5, and L5. Formation of the viral membrane is necessary for the assembly of the complex. In terms of processing, contains two intramolecular disulfide bonds. They are created by the viral disulfide bond formation pathway, a poxvirus-specific pathway that operates on the cytoplasmic side of the MV membranes.

It is found in the virion membrane. Envelope protein part of the entry-fusion complex responsible for the virus membrane fusion with host cell membrane during virus entry. The protein is Virion membrane protein A21 homolog of Vertebrata (FPV).